Here is a 396-residue protein sequence, read N- to C-terminus: Phosphoglycerate kinase (396 aa).

Substrate-binding positions include 21 to 23 (DFN), R37, 60 to 63 (HLGR), R121, and R154. Residues K205, G296, E327, and 353-356 (GGDS) each bind ATP.

The protein belongs to the phosphoglycerate kinase family. Monomer.

It is found in the cytoplasm. The enzyme catalyses (2R)-3-phosphoglycerate + ATP = (2R)-3-phospho-glyceroyl phosphate + ADP. It functions in the pathway carbohydrate degradation; glycolysis; pyruvate from D-glyceraldehyde 3-phosphate: step 2/5. In Anaeromyxobacter dehalogenans (strain 2CP-1 / ATCC BAA-258), this protein is Phosphoglycerate kinase.